Consider the following 394-residue polypeptide: Phosphoglycerate kinase (394 aa).

Substrate-binding positions include 21-23 (DFN), Arg36, 59-62 (HLGR), Arg118, and Arg151. Residue Ser183 is modified to Phosphoserine. ATP is bound by residues Lys201 and Gly292. Thr299 carries the phosphothreonine modification. ATP contacts are provided by residues Glu323 and 350–353 (GGDS).

The protein belongs to the phosphoglycerate kinase family. As to quaternary structure, monomer.

It is found in the cytoplasm. The catalysed reaction is (2R)-3-phosphoglycerate + ATP = (2R)-3-phospho-glyceroyl phosphate + ADP. The protein operates within carbohydrate degradation; glycolysis; pyruvate from D-glyceraldehyde 3-phosphate: step 2/5. The protein is Phosphoglycerate kinase of Bacillus anthracis (strain A0248).